The primary structure comprises 102 residues: RNA-binding protein Hfq (102 aa).

Positions 9–68 constitute a Sm domain; sequence DPFLNALRRERVPVSIYLVNGIKLQGQIESFDQFVILLKNTVSQMVYKHAISTVVPSRPV. Residues 63–102 form a disordered region; it reads VPSRPVSHHSNNAGGGSNNYHHSNNAQPSSAASQDSEDAE. The span at 70 to 96 shows a compositional bias: low complexity; sequence HHSNNAGGGSNNYHHSNNAQPSSAASQ.

This sequence belongs to the Hfq family. As to quaternary structure, homohexamer.

In terms of biological role, RNA chaperone that binds small regulatory RNA (sRNAs) and mRNAs to facilitate mRNA translational regulation in response to envelope stress, environmental stress and changes in metabolite concentrations. Also binds with high specificity to tRNAs. This chain is RNA-binding protein Hfq, found in Cronobacter sakazakii (strain ATCC BAA-894) (Enterobacter sakazakii).